Reading from the N-terminus, the 429-residue chain is Ribosomal RNA small subunit methyltransferase B (429 aa).

Residues 254-260 (CAAPGGK), Asp-277, Asp-303, and Asp-322 each bind S-adenosyl-L-methionine. The active-site Nucleophile is Cys-375.

This sequence belongs to the class I-like SAM-binding methyltransferase superfamily. RsmB/NOP family.

The protein localises to the cytoplasm. The catalysed reaction is cytidine(967) in 16S rRNA + S-adenosyl-L-methionine = 5-methylcytidine(967) in 16S rRNA + S-adenosyl-L-homocysteine + H(+). Functionally, specifically methylates the cytosine at position 967 (m5C967) of 16S rRNA. The sequence is that of Ribosomal RNA small subunit methyltransferase B from Escherichia coli (strain UTI89 / UPEC).